A 182-amino-acid polypeptide reads, in one-letter code: ATP synthase subunit delta (182 aa).

It belongs to the ATPase delta chain family. F-type ATPases have 2 components, F(1) - the catalytic core - and F(0) - the membrane proton channel. F(1) has five subunits: alpha(3), beta(3), gamma(1), delta(1), epsilon(1). F(0) has three main subunits: a(1), b(2) and c(10-14). The alpha and beta chains form an alternating ring which encloses part of the gamma chain. F(1) is attached to F(0) by a central stalk formed by the gamma and epsilon chains, while a peripheral stalk is formed by the delta and b chains.

The protein resides in the cell inner membrane. F(1)F(0) ATP synthase produces ATP from ADP in the presence of a proton or sodium gradient. F-type ATPases consist of two structural domains, F(1) containing the extramembraneous catalytic core and F(0) containing the membrane proton channel, linked together by a central stalk and a peripheral stalk. During catalysis, ATP synthesis in the catalytic domain of F(1) is coupled via a rotary mechanism of the central stalk subunits to proton translocation. Functionally, this protein is part of the stalk that links CF(0) to CF(1). It either transmits conformational changes from CF(0) to CF(1) or is implicated in proton conduction. The polypeptide is ATP synthase subunit delta (Cytophaga hutchinsonii (strain ATCC 33406 / DSM 1761 / CIP 103989 / NBRC 15051 / NCIMB 9469 / D465)).